The following is a 363-amino-acid chain: Flagellar P-ring protein (363 aa).

An N-terminal signal peptide occupies residues 1–20 (MKIKLILACALMVFSAASSA).

The protein belongs to the FlgI family. As to quaternary structure, the basal body constitutes a major portion of the flagellar organelle and consists of four rings (L,P,S, and M) mounted on a central rod.

The protein localises to the periplasm. Its subcellular location is the bacterial flagellum basal body. Assembles around the rod to form the L-ring and probably protects the motor/basal body from shearing forces during rotation. The protein is Flagellar P-ring protein of Shewanella loihica (strain ATCC BAA-1088 / PV-4).